The sequence spans 103 residues: Histone H4 (103 aa).

Positions 1–14 (MSGRGKGGKGLGKG) are enriched in gly residues. A disordered region spans residues 1–20 (MSGRGKGGKGLGKGGAKRHR). An N-acetylserine modification is found at S2. An N6-acetyllysine modification is found at K17. The DNA-binding element occupies 17 to 21 (KRHRK). K21 bears the N6-methyllysine mark.

It belongs to the histone H4 family. As to quaternary structure, the nucleosome is a histone octamer containing two molecules each of H2A, H2B, H3 and H4 assembled in one H3-H4 heterotetramer and two H2A-H2B heterodimers. The octamer wraps approximately 147 bp of DNA.

Its subcellular location is the nucleus. It is found in the chromosome. Its function is as follows. Core component of nucleosome. Nucleosomes wrap and compact DNA into chromatin, limiting DNA accessibility to the cellular machineries which require DNA as a template. Histones thereby play a central role in transcription regulation, DNA repair, DNA replication and chromosomal stability. DNA accessibility is regulated via a complex set of post-translational modifications of histones, also called histone code, and nucleosome remodeling. This chain is Histone H4, found in Eucalyptus globulus (Tasmanian blue gum).